The sequence spans 218 residues: uncharacterized protein (218 aa).

Disordered regions lie at residues 30–71 (FSHR…RSPP), 93–120 (SGRG…PRPD), and 133–209 (MEVE…PGFP). A compositionally biased stretch (low complexity) spans 43–71 (PGAPAVVPAPVSAPRPASSPARSESRSPP). Gly residues predominate over residues 94 to 110 (GRGGGGGGGGGARTGGG). The segment covering 138–148 (PPHPPPQPQVC) has biased composition (pro residues). Residues 156–171 (PGHGRAGLPEGKGPGG) show a composition bias toward gly residues. The span at 191–209 (RAPSPAAPRRGRLPAPGFP) shows a compositional bias: low complexity.

This is an uncharacterized protein from Homo sapiens (Human).